Consider the following 336-residue polypeptide: Ornithine carbamoyltransferase, catabolic (336 aa).

Carbamoyl phosphate contacts are provided by residues 57 to 60 (STRT), glutamine 84, arginine 108, and 135 to 138 (HPTQ). L-ornithine contacts are provided by residues asparagine 168, aspartate 232, and 236-237 (SM). Carbamoyl phosphate-binding positions include 274–275 (CL) and arginine 321.

The protein belongs to the aspartate/ornithine carbamoyltransferase superfamily. OTCase family.

The protein localises to the cytoplasm. It carries out the reaction carbamoyl phosphate + L-ornithine = L-citrulline + phosphate + H(+). It functions in the pathway amino-acid degradation; L-arginine degradation via ADI pathway; carbamoyl phosphate from L-arginine: step 2/2. Functionally, reversibly catalyzes the transfer of the carbamoyl group from carbamoyl phosphate (CP) to the N(epsilon) atom of ornithine (ORN) to produce L-citrulline. The sequence is that of Ornithine carbamoyltransferase, catabolic (arcB) from Ectopseudomonas mendocina (Pseudomonas mendocina).